A 1337-amino-acid polypeptide reads, in one-letter code: DNA mismatch repair protein Msh6 (1337 aa).

The PWWP domain occupies 68 to 130; the sequence is PGDLVWAKME…IKYLRPYKGS (63 aa). The segment at 170–310 is disordered; that stretch reads AVCSEPSDTE…SEAPKRAAPV (141 aa). Residues 176-187 show a composition bias toward acidic residues; sequence SDTEEAEEEEME. Positions 226–248 are enriched in basic and acidic residues; sequence VLDSDSDRDGSDVEFKPDVKEAS. Acidic residues predominate over residues 257-272; the sequence is DENEATDVETDEESIE. Basic residues predominate over residues 279–292; sequence PSKRKRGNVSKPSK. The segment covering 294 to 305 has biased composition (basic and acidic residues); the sequence is SSLENEHSEAPK. Position 1111–1118 (1111–1118) interacts with ATP; it reads GPNMGGKS.

Belongs to the DNA mismatch repair MutS family.

Its subcellular location is the nucleus. Its function is as follows. Component of the post-replicative DNA mismatch repair system (MMR). Involved in B cell growth by positively regulating B cell proliferation and controlling replication efficiency. Controls cell cycle to prevent re-replication and defects in DNA damage-induced G2 checkpoint. Doesn't seem to counteract or control the immunoglobulin gene conversion (Ig GC) and to contribute to guanine/uracil mismatch repair. This chain is DNA mismatch repair protein Msh6, found in Gallus gallus (Chicken).